The primary structure comprises 352 residues: MAKIAVYGAGSWGTALAVSMGKAGHEVALVGRNLSEMDLMEQRRENRPYLPGVVLPPTVRPTGDAGVLEEAEMLVLSVPSHSVRETAQKIRAYLQPGTIVVNTAKGLEEGSHKRLSQVLTEELPHHPIVVLSGPSHAEEVGKDMPTTVVVASQNSQAAEAVQDMLMTPKFRVYTNPDTIGVELGGAFKNIIALCAGFADGLGFGDNTKAALMTRGIAEITRLGAAMGGNPLTFAGLAGVGDLIVTCTSRHSRNHRAGVALGEGKPLEQVLKEVGMVVEGVRTTRVAYELSRQYEISMPITEQAYQVLFQGADPRAAVSALMMRGKKHEIEEVALIAMEQGSYQENGPDDHGE.

NADPH is bound by residues serine 11, tryptophan 12, arginine 32, and lysine 105. Residues lysine 105, glycine 133, and serine 135 each contribute to the sn-glycerol 3-phosphate site. Residue alanine 137 coordinates NADPH. Positions 188, 241, 251, 252, and 253 each coordinate sn-glycerol 3-phosphate. The Proton acceptor role is filled by lysine 188. Residue arginine 252 participates in NADPH binding. Valine 276 and glutamate 278 together coordinate NADPH.

The protein belongs to the NAD-dependent glycerol-3-phosphate dehydrogenase family.

The protein localises to the cytoplasm. The catalysed reaction is sn-glycerol 3-phosphate + NAD(+) = dihydroxyacetone phosphate + NADH + H(+). The enzyme catalyses sn-glycerol 3-phosphate + NADP(+) = dihydroxyacetone phosphate + NADPH + H(+). It participates in membrane lipid metabolism; glycerophospholipid metabolism. Functionally, catalyzes the reduction of the glycolytic intermediate dihydroxyacetone phosphate (DHAP) to sn-glycerol 3-phosphate (G3P), the key precursor for phospholipid synthesis. The protein is Glycerol-3-phosphate dehydrogenase [NAD(P)+] of Desulfitobacterium hafniense (strain Y51).